The primary structure comprises 301 residues: Cytidine deaminase 1 (301 aa).

2 consecutive CMP/dCMP-type deaminase domains span residues 23–156 (SVIQ…FGPD) and 188–301 (DSSA…CYEA). A substrate-binding site is contributed by 64–66 (NVE). His-77 contacts Zn(2+). Catalysis depends on Glu-79, which acts as the Proton donor. Positions 104 and 107 each coordinate Zn(2+).

This sequence belongs to the cytidine and deoxycytidylate deaminase family. In terms of assembly, homodimer. Zn(2+) is required as a cofactor. In terms of tissue distribution, expressed in roots, rosette leaves, stems and flowers.

It carries out the reaction cytidine + H2O + H(+) = uridine + NH4(+). The catalysed reaction is 2'-deoxycytidine + H2O + H(+) = 2'-deoxyuridine + NH4(+). Inhibited by uridine, CMP and dCMP. In terms of biological role, this enzyme scavenges exogenous and endogenous cytidine and 2'-deoxycytidine for UMP synthesis. Functions as a conventional cytidine deaminase. Has no affinity for RNA and is not involved in RNA-editing by C-to-U deamination. The polypeptide is Cytidine deaminase 1 (CDA1) (Arabidopsis thaliana (Mouse-ear cress)).